Reading from the N-terminus, the 536-residue chain is MDKNLNLWDMSTFIQQYGALTADHPTHTPEDSPQTVPSPRSSSAHSPEIQELRSLQETRPARLGARSQSRSSKHGLQQCSSSPSDESFRLHAELAAWCERVETKPSLLAKLGCCAAPPVVGDHREQRREAMERIMRCLDAGQAGTQLTLRDLNLSQLPPGLHRLAHLRDLDVADNVNLTRLPEDLSLCKHLERINADGCSIAALPSKIGALKNLSEISLAFNELRTLPDSIGQCSSLTTIVVPGCKINKLPASLANLTQLKKLDVAANIELSELSPHMNLDDVAVHSTQTRLGLMHRIFKAPTFDPETRQRLSYQASALRDRWAALSHHLSPQARARVDQMREGASTTLSSQDHKASTAWKTATEKVSSWAEEGAPITLDRIFKLNQLLLPEGDDDNDPIGGQLRKVGIQAAPSNTWTECRYPPPETLKDEMAKFSGWLEHSEQQAHARDALGHIEFAAQLHQRLVSLHPFDDANGRTARLAMDWALQRHGLPPAPPVGEASRLPASFLGGKRVSPEKVVLETLEGIATVMNQVHQ.

Residues 22–84 are disordered; the sequence is ADHPTHTPED…GLQQCSSSPS (63 aa). Residues 31–45 are compositionally biased toward polar residues; that stretch reads DSPQTVPSPRSSSAH. Basic and acidic residues predominate over residues 48–60; it reads EIQELRSLQETRP. The span at 66–84 shows a compositional bias: polar residues; the sequence is RSQSRSSKHGLQQCSSSPS. LRR repeat units follow at residues 140-164, 165-189, 191-211, 212-234, 236-257, and 258-282; these read AGQA…LHRL, AHLR…SLCK, LERI…IGAL, KNLS…IGQC, SLTT…LANL, and TQLK…NLDD. A Fido domain is found at 377 to 533; it reads ITLDRIFKLN…LEGIATVMNQ (157 aa).

It in the C-terminal section; belongs to the fic family. Interacts with several members of the Arabidopsis RLCK VIIa subfamily.

The protein localises to the secreted. Its subcellular location is the host cell. The protein resides in the host cell membrane. It carries out the reaction L-seryl-[protein] + UTP = O-(5'-uridylyl)-L-seryl-[protein] + diphosphate. The catalysed reaction is L-threonyl-[protein] + UTP = uridylyl-L-threonyl-[protein] + diphosphate. In terms of biological role, functions both as a virulence and an avirulence gene in Arabidopsis. Causes disease on the Kashmir (Kas) ecotype, but not on Columbia (Col-0) ecotype. Acts by directly uridylylating the conserved phosphorylation sites in the activation loop of a number of host receptor-like cytoplasmic protein kinases (RLCK), including BIK1, RIPK, PBL1 and PBL2, preventing the activation of these kinases and subsequent signal transduction. In susceptible Arabidopsis plants, uridylylation of BIK1 inhibits the PAMP-triggered immunity (PTI) signaling cascade and thereby promotes bacterial virulence. It also inhibits RPM1-dependent effector-triggered immunity (ETI) in mesophyll tissues by targeting RIPK. In contrast, in the resistant ecotype Col-0, xopAC is a major avirulence gene. Uridylylation of PBL2 triggers the PBL2-RKS1 interaction and thus the assembly of the PBL2-RKS1-ZAR1 complex, which, in turn, activates effector-triggered immunity (ETI) against X.campestris. The chain is Uridine 5'-monophosphate transferase from Xanthomonas campestris pv. campestris (strain 8004).